Here is a 65-residue protein sequence, read N- to C-terminus: Large ribosomal subunit protein bL35 (65 aa).

Residues 1–22 (MPKIKTVRGAAKRFKKTGSGGF) form a disordered region. The span at 10 to 22 (AAKRFKKTGSGGF) shows a compositional bias: basic residues.

It belongs to the bacterial ribosomal protein bL35 family.

In Serratia proteamaculans (strain 568), this protein is Large ribosomal subunit protein bL35.